A 439-amino-acid chain; its full sequence is Tryptophan synthase beta chain 2 (439 aa).

The residue at position 99 (K99) is an N6-(pyridoxal phosphate)lysine.

Belongs to the TrpB family. As to quaternary structure, tetramer of two alpha and two beta chains. Pyridoxal 5'-phosphate is required as a cofactor.

It catalyses the reaction (1S,2R)-1-C-(indol-3-yl)glycerol 3-phosphate + L-serine = D-glyceraldehyde 3-phosphate + L-tryptophan + H2O. Its pathway is amino-acid biosynthesis; L-tryptophan biosynthesis; L-tryptophan from chorismate: step 5/5. Functionally, the beta subunit is responsible for the synthesis of L-tryptophan from indole and L-serine. This Corynebacterium efficiens (strain DSM 44549 / YS-314 / AJ 12310 / JCM 11189 / NBRC 100395) protein is Tryptophan synthase beta chain 2 (trpB2).